Here is a 354-residue protein sequence, read N- to C-terminus: Uroporphyrinogen decarboxylase (354 aa).

Substrate contacts are provided by residues 27–31 (RQAGR), Phe-46, Asp-77, Tyr-154, Thr-209, and His-327.

This sequence belongs to the uroporphyrinogen decarboxylase family. In terms of assembly, homodimer.

The protein resides in the cytoplasm. It carries out the reaction uroporphyrinogen III + 4 H(+) = coproporphyrinogen III + 4 CO2. It participates in porphyrin-containing compound metabolism; protoporphyrin-IX biosynthesis; coproporphyrinogen-III from 5-aminolevulinate: step 4/4. In terms of biological role, catalyzes the decarboxylation of four acetate groups of uroporphyrinogen-III to yield coproporphyrinogen-III. In Salmonella typhi, this protein is Uroporphyrinogen decarboxylase.